Consider the following 566-residue polypeptide: Serine/threonine-protein kinase PknE (566 aa).

Topologically, residues 1 to 337 (MDGTAESREG…PLPRSARQPW (337 aa)) are cytoplasmic. Serine 7 is subject to Phosphoserine; by autocatalysis. Position 11 is a phosphothreonine; by autocatalysis (threonine 11). Positions 16-275 (YRLRRLVGRG…DLSAAAHAAL (260 aa)) constitute a Protein kinase domain. ATP contacts are provided by residues 22–30 (VGRGGMGDV) and lysine 45. 2 positions are modified to phosphothreonine; by autocatalysis: threonine 50 and threonine 59. The active-site Proton acceptor is aspartate 139. Phosphothreonine; by autocatalysis occurs at positions 170, 175, and 178. A disordered region spans residues 296–330 (PVPSTHPVSPGTRWPQPTPWAGGAPPWGPPSSPLP). A helical transmembrane segment spans residues 338–358 (LWVGVAVAVVVALAGGLGIAL). Topologically, residues 359 to 566 (AHPWRSSGPR…DPSWLARLIG (208 aa)) are extracellular.

This sequence belongs to the protein kinase superfamily. Ser/Thr protein kinase family. In terms of assembly, homodimer. Post-translationally, autophosphorylated on serine and threonine residues. Dephosphorylated by PstP.

The protein localises to the cell membrane. It catalyses the reaction L-seryl-[protein] + ATP = O-phospho-L-seryl-[protein] + ADP + H(+). The catalysed reaction is L-threonyl-[protein] + ATP = O-phospho-L-threonyl-[protein] + ADP + H(+). Functionally, a serine/threonine-protein kinase, acts on HupB in vitro, modifying at least 2 Ser and 8 Thr residues. Important for bacterial survival in the host during infection. The chain is Serine/threonine-protein kinase PknE from Mycobacterium tuberculosis (strain ATCC 25177 / H37Ra).